The following is a 157-amino-acid chain: DNA gyrase inhibitor (157 aa).

This sequence belongs to the DNA gyrase inhibitor family. In terms of assembly, interacts with DNA gyrase.

It localises to the cytoplasm. Inhibits the supercoiling activity of DNA gyrase. Acts by inhibiting DNA gyrase at an early step, prior to (or at the step of) binding of DNA by the gyrase. It protects cells against toxins that target DNA gyrase, by inhibiting activity of these toxins and reducing the formation of lethal double-strand breaks in the cell. The protein is DNA gyrase inhibitor of Citrobacter rodentium (strain ICC168) (Citrobacter freundii biotype 4280).